The following is a 52-amino-acid chain: MNGATSLYDEVIIINKIPPKKIDTKGVATEEVATKKVLLNKLLTTQLLNEPE.

Functionally, identified as a multicopy suppressor of the slow growth phenotype of an rsgA (yjeQ) deletion mutant. The protein is Protein YabQ (yabQ) of Escherichia coli (strain K12).